The primary structure comprises 144 residues: Large ribosomal subunit protein uL15 (144 aa).

The segment at 1-57 (MRLNTLSPAAGSKHAPKRVGRGIGSGLGKTGGRGHKGQKSRSGGKVRPGFEGGQMPL) is disordered. Residues 21–31 (RGIGSGLGKTG) show a composition bias toward gly residues. Positions 32-44 (GRGHKGQKSRSGG) are enriched in basic residues.

It belongs to the universal ribosomal protein uL15 family. As to quaternary structure, part of the 50S ribosomal subunit.

Functionally, binds to the 23S rRNA. This is Large ribosomal subunit protein uL15 from Vibrio vulnificus (strain CMCP6).